The sequence spans 756 residues: Deoxynucleotidyltransferase terminal-interacting protein 2 (756 aa).

The disordered stretch occupies residues Met-1–His-99. Residues Ala-9 to Ser-21 show a composition bias toward low complexity. Ser-21 carries the post-translational modification Phosphoserine. Polar residues-rich tracts occupy residues Pro-35–Gln-55 and Glu-80–Val-96. Ser-117 bears the Phosphoserine mark. Phosphothreonine is present on Thr-129. Ser-141, Ser-145, Ser-148, Ser-184, and Ser-194 each carry phosphoserine. The segment at Pro-156 to Tyr-261 is disordered. Residues Arg-201–Lys-211 are compositionally biased toward basic residues. Glycyl lysine isopeptide (Lys-Gly) (interchain with G-Cter in SUMO2) cross-links involve residues Lys-217 and Lys-220. Thr-232 bears the Phosphothreonine mark. Phosphoserine occurs at positions 239, 251, and 253. A compositionally biased stretch (polar residues) spans Arg-242–Asn-256. Glycyl lysine isopeptide (Lys-Gly) (interchain with G-Cter in SUMO2) cross-links involve residues Lys-257, Lys-316, and Lys-321. Phosphoserine is present on residues Ser-324 and Ser-330. Lys-345 participates in a covalent cross-link: Glycyl lysine isopeptide (Lys-Gly) (interchain with G-Cter in SUMO2). Ser-381 bears the Phosphoserine mark. A Glycyl lysine isopeptide (Lys-Gly) (interchain with G-Cter in SUMO2) cross-link involves residue Lys-384. Phosphoserine is present on residues Ser-434 and Ser-512. The stretch at Leu-505–Phe-542 forms a coiled coil. Positions Lys-510–Asp-547 are disordered. The interval Phe-548–Gln-605 is tdBR region; mediates interaction with DNTT. Residue Lys-558 forms a Glycyl lysine isopeptide (Lys-Gly) (interchain with G-Cter in SUMO2) linkage. Ser-569 carries the phosphoserine modification. Residues Lys-584 and Lys-606 each participate in a glycyl lysine isopeptide (Lys-Gly) (interchain with G-Cter in SUMO2) cross-link. A Phosphothreonine modification is found at Thr-610. Glycyl lysine isopeptide (Lys-Gly) (interchain with G-Cter in SUMO2) cross-links involve residues Lys-626, Lys-649, Lys-658, Lys-686, and Lys-731.

As to quaternary structure, forms a ternary complex with DNTT and core histone; interaction with PCNA releases DNTT and H2A/H2B histones from this ternary complex. Interacts with ESR1, ESR2, PPARG and RXRA. Part of the small subunit (SSU) processome, composed of more than 70 proteins and the RNA chaperone small nucleolar RNA (snoRNA) U3. Widely expressed with higher levels in testis.

The protein resides in the nucleus. The protein localises to the nucleolus. Regulates the transcriptional activity of DNTT and ESR1. May function as a chromatin remodeling protein. Part of the small subunit (SSU) processome, first precursor of the small eukaryotic ribosomal subunit. During the assembly of the SSU processome in the nucleolus, many ribosome biogenesis factors, an RNA chaperone and ribosomal proteins associate with the nascent pre-rRNA and work in concert to generate RNA folding, modifications, rearrangements and cleavage as well as targeted degradation of pre-ribosomal RNA by the RNA exosome. The polypeptide is Deoxynucleotidyltransferase terminal-interacting protein 2 (Homo sapiens (Human)).